We begin with the raw amino-acid sequence, 687 residues long: Probable WRKY transcription factor 2 (687 aa).

Residues 197 to 276 (YGNYNNRSSS…AGGAPAEDGY (80 aa)) are disordered. Polar residues-rich tracts occupy residues 199–208 (NYNNRSSSHQ) and 219–249 (NIESSNLYGIETDNQNGQNKTSDVTTNTSLE). The WRKY 1 DNA-binding region spans 267–331 (AGGAPAEDGY…YKGAHNHLKP (65 aa)). Residues Cys-298, Cys-303, His-326, and His-328 each coordinate Zn(2+). Disordered regions lie at residues 324–384 (GAHN…STRF) and 416–453 (FSNDEDEDDRGTHGSVSLGYDGGGGGGGGEGDESESKR). The segment covering 354 to 379 (RDSAATWVSCNNTQQQGGSNENNVEE) has biased composition (polar residues). Gly residues predominate over residues 435-444 (YDGGGGGGGG). Positions 481-546 (SDVDILDDGY…YEGKHNHDVP (66 aa)) form a DNA-binding region, WRKY 2. 4 residues coordinate Zn(2+): Cys-512, Cys-517, His-541, and His-543. The tract at residues 537–599 (YEGKHNHDVP…QVTTNNQSPF (63 aa)) is disordered. The span at 553 to 565 (HGGGGDSGNGNSG) shows a compositional bias: gly residues. The segment covering 578-589 (HHSEPPRGRFDR) has biased composition (basic and acidic residues). The span at 590–599 (QVTTNNQSPF) shows a compositional bias: polar residues.

Belongs to the WRKY group I family. As to expression, low expression in senescent leaves. Expressed in both the unfertilized egg cell and the pollen tube.

It localises to the nucleus. Its function is as follows. Transcription factor. Regulates WOX8 and WOX9 expression and basal cell division patterns during early embryogenesis. Interacts specifically with the W box (5'-(T)TGAC[CT]-3'), a frequently occurring elicitor-responsive cis-acting element. Required to repolarize the zygote from a transient symmetric state. This chain is Probable WRKY transcription factor 2, found in Arabidopsis thaliana (Mouse-ear cress).